A 155-amino-acid chain; its full sequence is MRRRRAEVRKVPPDPIYNDVLVSKLINRVMWDGKKSIAQKIVYKAMEYLSEKTKKDPLEALHQAIDNVRPLVEVRPRRVGGATYQVPIEVEEPRKTSLALRWIVEAARSKKGRPMAEKLGEELVNAFNNTGTAIKKKEDVHRMAEANRAFAHFRW.

It belongs to the universal ribosomal protein uS7 family. Part of the 30S ribosomal subunit. Contacts proteins S9 and S11.

Its function is as follows. One of the primary rRNA binding proteins, it binds directly to 16S rRNA where it nucleates assembly of the head domain of the 30S subunit. Is located at the subunit interface close to the decoding center, probably blocks exit of the E-site tRNA. This Thermosipho africanus (strain TCF52B) protein is Small ribosomal subunit protein uS7.